A 1773-amino-acid polypeptide reads, in one-letter code: Zinc finger CCCH domain-containing protein 19 (1773 aa).

Positions S145 to L166 are disordered. Positions D147–S156 are enriched in basic and acidic residues. A coiled-coil region spans residues G196–T218. Disordered regions lie at residues I270–E290, D361–T409, and I434–K591. Basic and acidic residues-rich tracts occupy residues G273–V286 and D361–E378. A coiled-coil region spans residues A403–M437. 2 stretches are compositionally biased toward basic and acidic residues: residues M444–N455 and K497–R513. Composition is skewed to acidic residues over residues I514 to A529 and E551 to E572. Residues G578–K588 show a composition bias toward basic residues. Residues R581–K588 carry the Nuclear localization signal 1 motif. A PHD-type zinc finger spans residues E599–S665. Basic and acidic residues predominate over residues A741–N751. The segment at A741–D797 is disordered. The segment covering A752–D762 has biased composition (polar residues). The 84-residue stretch at S801 to K884 folds into the SWIB/MDM2 domain. A compositionally biased stretch (basic and acidic residues) spans P903 to G919. Residues P903 to R935 form a disordered region. The segment covering K920–R935 has biased composition (basic residues). Residues D921–K928 carry the Nuclear localization signal 2 motif. The region spanning A944–V1076 is the Plus3 domain. The segment covering E1139 to P1152 has biased composition (basic and acidic residues). The segment at E1139–A1274 is disordered. Over residues D1153–E1163 the composition is skewed to acidic residues. Residues F1193–R1212 show a composition bias toward polar residues. S1281 is subject to Phosphoserine. Positions E1307 to A1361 constitute a GYF domain. Polar residues-rich tracts occupy residues R1409–T1433, S1441–T1469, V1499–S1509, and S1518–G1528. Disordered stretches follow at residues R1409–T1469, Q1485–Q1605, and G1649–N1746. Over residues S1529–P1555 the composition is skewed to low complexity. Over residues S1569–W1579 the composition is skewed to polar residues. Low complexity-rich tracts occupy residues N1585 to S1602 and Q1666 to A1677. The segment covering G1678–I1708 has biased composition (polar residues). Positions G1722–G1735 are enriched in low complexity. A compositionally biased stretch (polar residues) spans N1737 to N1746. The C3H1-type zinc-finger motif lies at F1747 to N1773.

Interacts with unmethylated histone H3 and AGO2. The interaction with AGO2 in required to direct DNA methylation and silencing. Expressed in seedlings, mostly in the vasculature and shoot apices of young seedlings.

The protein resides in the nucleus. Its function is as follows. Plays a central role in integrating RNA silencing and chromatin signals in 21 nt siRNA-dependent DNA methylation on cytosine pathway leading to transcriptional gene silencing of specific sequences. Involved in a chromatin-based RNA silencing pathway that encompasses both post-transcriptional gene silencing (PTGS) (e.g. RDR1, RDR6 and AGO2) and transcriptional gene silencing (TGS) (e.g. siRNA-dependent DNA methylation and histone H3) components. Mediates siRNA accumulation at specific chromatin loci. Binds H3K4me0 through its PHD to enforce low levels of H3K4 methylation and gene silencing at a subset of genomic loci. This Arabidopsis thaliana (Mouse-ear cress) protein is Zinc finger CCCH domain-containing protein 19 (NERD).